Consider the following 614-residue polypeptide: Zinc metalloproteinase-disintegrin-like BmMP (614 aa).

Positions Met-1–Ser-20 are cleaved as a signal peptide. The propeptide occupies Ile-21–Ala-188. N-linked (GlcNAc...) asparagine glycosylation is present at Asn-187. The Peptidase M12B domain maps to Lys-205–Pro-401. Cystine bridges form between Cys-316-Cys-396, Cys-356-Cys-380, Cys-359-Cys-364, Cys-412-Cys-441, Cys-423-Cys-436, Cys-425-Cys-431, Cys-435-Cys-458, Cys-449-Cys-455, Cys-454-Cys-480, Cys-467-Cys-487, Cys-474-Cys-506, Cys-499-Cys-511, Cys-518-Cys-568, Cys-533-Cys-576, Cys-546-Cys-556, Cys-563-Cys-602, and Cys-596-Cys-607. His-341 lines the Zn(2+) pocket. The active site involves Glu-342. Zn(2+) contacts are provided by His-345 and His-351. The region spanning Pro-409–Asn-495 is the Disintegrin domain. Positions Asp-473–Asp-475 match the D/ECD-tripeptide motif.

Belongs to the venom metalloproteinase (M12B) family. P-III subfamily. P-IIIa sub-subfamily. As to quaternary structure, monomer. Requires Zn(2+) as cofactor. Expressed by the venom gland.

The protein resides in the secreted. Snake venom zinc metalloproteinase that inhibits platelet aggregation and degrades fibrinogen. The polypeptide is Zinc metalloproteinase-disintegrin-like BmMP (Bungarus multicinctus (Many-banded krait)).